The sequence spans 123 residues: Chaperone protein SycN (123 aa).

Interacts with YscB to form a complex which specifically binds to YopN.

It localises to the cytoplasm. The protein localises to the cell inner membrane. In terms of biological role, functions as a specific chaperone for YopN. It could facilitate the secretion and the subsequent translocation of YopN. The polypeptide is Chaperone protein SycN (sycN) (Yersinia enterocolitica).